The chain runs to 184 residues: Regulatory protein RecX (184 aa).

The disordered stretch occupies residues 1 to 21 (MTLFPLPSTSDPAEADESTKR).

This sequence belongs to the RecX family.

It is found in the cytoplasm. Modulates RecA activity. This is Regulatory protein RecX from Mycolicibacterium vanbaalenii (strain DSM 7251 / JCM 13017 / BCRC 16820 / KCTC 9966 / NRRL B-24157 / PYR-1) (Mycobacterium vanbaalenii).